We begin with the raw amino-acid sequence, 390 residues long: Protein PIN-LIKES 3 (390 aa).

At M1–P14 the chain is on the lumenal side. The helical transmembrane segment at V15–L35 threads the bilayer. At L36–Y43 the chain is on the cytoplasmic side. Residues L44–L61 form a helical membrane-spanning segment. At A62–M76 the chain is on the lumenal side. Residues P77–I97 form a helical membrane-spanning segment. Residues T98–L107 lie on the Cytoplasmic side of the membrane. The chain crosses the membrane as a helical span at residues I108 to V128. Residues C129–K144 lie on the Lumenal side of the membrane. Residues Y145–V165 traverse the membrane as a helical segment. Residues Y166 to T227 are Cytoplasmic-facing. A helical membrane pass occupies residues I228–L248. At R249 to S265 the chain is on the lumenal side. The chain crosses the membrane as a helical span at residues V266 to L286. The Cytoplasmic portion of the chain corresponds to K287 to S297. The chain crosses the membrane as a helical span at residues S298 to V318. Residues R319 to P331 are Lumenal-facing. Residues L332 to I352 traverse the membrane as a helical segment. Residues T353 to S364 are Cytoplasmic-facing. A helical membrane pass occupies residues V365–F385. The Lumenal portion of the chain corresponds to M386–A390.

This sequence belongs to the auxin efflux carrier (TC 2.A.69.2) family. As to expression, expressed in seedlings, rosette and cauline leaves, flowers and siliques.

It is found in the endoplasmic reticulum membrane. Involved in cellular auxin homeostasis by regulating auxin metabolism. Regulates intracellular auxin accumulation at the endoplasmic reticulum and thus auxin availability for nuclear auxin signaling. The chain is Protein PIN-LIKES 3 (PILS3) from Arabidopsis thaliana (Mouse-ear cress).